The chain runs to 293 residues: 3-methyl-2-oxobutanoate hydroxymethyltransferase (293 aa).

The segment at 1-26 is disordered; sequence MTQAPVTAGTPYGTIPPASPLPQRRP. Residues aspartate 68 and aspartate 111 each contribute to the Mg(2+) site. 3-methyl-2-oxobutanoate is bound by residues 68 to 69, aspartate 111, and lysine 140; that span reads DS. Glutamate 142 serves as a coordination point for Mg(2+). The Proton acceptor role is filled by glutamate 209.

The protein belongs to the PanB family. As to quaternary structure, homodecamer; pentamer of dimers. Mg(2+) serves as cofactor.

Its subcellular location is the cytoplasm. It carries out the reaction 3-methyl-2-oxobutanoate + (6R)-5,10-methylene-5,6,7,8-tetrahydrofolate + H2O = 2-dehydropantoate + (6S)-5,6,7,8-tetrahydrofolate. The protein operates within cofactor biosynthesis; (R)-pantothenate biosynthesis; (R)-pantoate from 3-methyl-2-oxobutanoate: step 1/2. In terms of biological role, catalyzes the reversible reaction in which hydroxymethyl group from 5,10-methylenetetrahydrofolate is transferred onto alpha-ketoisovalerate to form ketopantoate. The protein is 3-methyl-2-oxobutanoate hydroxymethyltransferase of Delftia acidovorans (strain DSM 14801 / SPH-1).